Reading from the N-terminus, the 211-residue chain is FMN-dependent NADH:quinone oxidoreductase (211 aa).

Residues Ser-10 and 16 to 18 each bind FMN; that span reads SVS.

This sequence belongs to the azoreductase type 1 family. In terms of assembly, homodimer. Requires FMN as cofactor.

The catalysed reaction is 2 a quinone + NADH + H(+) = 2 a 1,4-benzosemiquinone + NAD(+). It catalyses the reaction N,N-dimethyl-1,4-phenylenediamine + anthranilate + 2 NAD(+) = 2-(4-dimethylaminophenyl)diazenylbenzoate + 2 NADH + 2 H(+). Quinone reductase that provides resistance to thiol-specific stress caused by electrophilic quinones. In terms of biological role, also exhibits azoreductase activity. Catalyzes the reductive cleavage of the azo bond in aromatic azo compounds to the corresponding amines. This Parafrankia sp. (strain EAN1pec) protein is FMN-dependent NADH:quinone oxidoreductase.